Here is a 292-residue protein sequence, read N- to C-terminus: MGNELFLAFTTSHLPLAEQKLARYKLRIVKPPKLPLEKKPNPDKDGPDYEPNLWMWVNPNIVYPPGKLEVSGRRKREDLTSTLPSSQPPQKEEDASCSEAAGVESLSQSSSKRSPPRKRFAFSPSTWELTEEEEAEDQEDSSSMALPSPHKRAPLQSRRLRQASSQAGRLWSRPPLNYFHLIALALRNSSPCGLNVQQIYSFTRKHFPFFRTAPEGWKNTVRHNLCFRDSFEKVPVSMQGGASTRPRSCLWKLTEEGHRRFAEEARALASTRLESIQQCMSQPDVMPFLFDL.

2 disordered regions span residues 31–50 (PPKL…PDYE) and 65–166 (PGKL…ASSQ). Composition is skewed to basic and acidic residues over residues 35–47 (PLEK…KDGP) and 70–79 (VSGRRKREDL). Positions 80–89 (TSTLPSSQPP) are enriched in polar residues. The span at 129–140 (LTEEEEAEDQED) shows a compositional bias: acidic residues. Residues 149 to 161 (PHKRAPLQSRRLR) are compositionally biased toward basic residues. A DNA-binding region (fork-head) is located at residues 173-272 (RPPLNYFHLI…EEARALASTR (100 aa)).

As to expression, expressed in testis (at protein level).

The protein resides in the nucleus. The protein localises to the cytoplasm. Its subcellular location is the perinuclear region. Transcription factor which acts as both an activator and a repressor. Activates transcription of a number of genes including the heat shock chaperones HSPA1A and HSPA6 and the antioxidant NADPH-dependent reductase DHRS2 which are involved in protection against oxidative stress. Required for normal brain development. The chain is Forkhead box protein R1 (FOXR1) from Homo sapiens (Human).